Consider the following 485-residue polypeptide: uncharacterized protein (485 aa).

The segment at 151 to 201 (IKAPTNNSQSGDGNGGTNNDNLLGTFDIREKSNGKKGESNGKQGNGQDKKT) is disordered. The span at 155–174 (TNNSQSGDGNGGTNNDNLLG) shows a compositional bias: low complexity. Basic and acidic residues predominate over residues 177–189 (DIREKSNGKKGES).

This sequence belongs to the MG185/MG260 family.

This is an uncharacterized protein from Mycoplasma pneumoniae (strain ATCC 29342 / M129 / Subtype 1) (Mycoplasmoides pneumoniae).